We begin with the raw amino-acid sequence, 251 residues long: MQPNEQPGTGPADTTLEQQDTAAAEVGHPRRIRSFVRRAGRTSTGQQRAIDELGPRFLLPYAAAPLDWEAAFGRTGARRIFEIGFGMGETSAHIAQLRPDDDFLGVEVHEPGVGALLKLIGERGIGNVRIVSHDAVEVLAQMIPEGTLDGIHVFFPDPWHKKRHNKRRLIQGPFVARLAAHLRPGGYLHCATDWEEYAHQMLEVLSAEPLLENTADGFAPRPDYRPVTKFEKRGLRLGHGVWDVVFRKRAA.

A disordered region spans residues 1–43 (MQPNEQPGTGPADTTLEQQDTAAAEVGHPRRIRSFVRRAGRTS). Over residues 29–40 (PRRIRSFVRRAG) the composition is skewed to basic residues. Residues glutamate 82, glutamate 107, aspartate 134, and aspartate 157 each contribute to the S-adenosyl-L-methionine site. Aspartate 157 is a catalytic residue. Lysine 161 contributes to the substrate binding site. Residues 163 to 168 (RHNKRR) form an interaction with RNA region. Substrate-binding positions include aspartate 193 and 228-231 (TKFE).

It belongs to the class I-like SAM-binding methyltransferase superfamily. TrmB family.

It carries out the reaction guanosine(46) in tRNA + S-adenosyl-L-methionine = N(7)-methylguanosine(46) in tRNA + S-adenosyl-L-homocysteine. Its pathway is tRNA modification; N(7)-methylguanine-tRNA biosynthesis. Catalyzes the formation of N(7)-methylguanine at position 46 (m7G46) in tRNA. The sequence is that of tRNA (guanine-N(7)-)-methyltransferase from Ralstonia nicotianae (strain ATCC BAA-1114 / GMI1000) (Ralstonia solanacearum).